The sequence spans 413 residues: MENMLLWLIFFTPGWTLIDGSEMEWDFMWHLRKVPRIVSERTFHLTSPAFEADAKMMVNTVCGIECQKELPTPSLSELEDYLSYETVFENGTRTLTRVKVQDLVLEPTQNITTKGVSVRRKRQVYGTDSRFSILDKRFLTNFPFSTAVKLSTGCSGILISPQHVLTAAHCVHDGKDYVKGSKKLRVGLLKMRNKSGGKKRRGSKRSRREASGGDQREGTREHLRERAKGGRRRKKSGRGQRIAEGRPSFQWTRVKNTHIPKGWARGGMGDATLDYDYALLELKRAHKKKYMELGISPTIKKMPGGMIHFSGFDNDRADQLVYRFCSVSDESNDLLYQYCDAESGSTGSGVYLRLKDPDKKNWKRKIIAVYSGHQWVDVHGVQKDYNVAVRITPLKYAQICLWIHGNDANCAYG.

A signal peptide spans 1–16 (MENMLLWLIFFTPGWT). Asparagine 90 is a glycosylation site (N-linked (GlcNAc...) asparagine). The region spanning 124 to 408 (VYGTDSRFSI…ICLWIHGNDA (285 aa)) is the Peptidase S1 domain. Cysteines 154 and 170 form a disulfide. Residues 191 to 207 (MRNKSGGKKRRGSKRSR) show a composition bias toward basic residues. The tract at residues 191–250 (MRNKSGGKKRRGSKRSRREASGGDQREGTREHLRERAKGGRRRKKSGRGQRIAEGRPSFQ) is disordered. A compositionally biased stretch (basic and acidic residues) spans 208-228 (REASGGDQREGTREHLRERAK). The span at 229–238 (GGRRRKKSGR) shows a compositional bias: basic residues.

It belongs to the peptidase S1 family.

The protein resides in the secreted. The sequence is that of Inactive serine protease 35 (PRSS35) from Homo sapiens (Human).